Here is a 203-residue protein sequence, read N- to C-terminus: Endo-type membrane-bound lytic murein transglycosylase A (203 aa).

A signal peptide spans 1–15; that stretch reads MKLRWFAFLMVLLAG. The N-palmitoyl cysteine moiety is linked to residue Cys16. Cys16 is lipidated: S-diacylglycerol cysteine.

It belongs to the transglycosylase Slt family.

The protein localises to the cell outer membrane. The enzyme catalyses Endolytic cleavage of the (1-&gt;4)-beta-glycosidic linkage between N-acetylmuramic acid (MurNAc) and N-acetylglucosamine (GlcNAc) residues in peptidoglycan with concomitant formation of a 1,6-anhydrobond in the MurNAc residue.. Functionally, murein-degrading enzyme. May play a role in recycling of muropeptides during cell elongation and/or cell division. Preferentially cleaves at a distance of more than two disaccharide units from the ends of the glycan chain. The chain is Endo-type membrane-bound lytic murein transglycosylase A from Enterobacter sp. (strain 638).